The primary structure comprises 196 residues: 7-methyl-GTP pyrophosphatase (196 aa).

Asp-72 acts as the Proton acceptor in catalysis.

Belongs to the Maf family. YceF subfamily. Requires a divalent metal cation as cofactor.

The protein localises to the cytoplasm. It carries out the reaction N(7)-methyl-GTP + H2O = N(7)-methyl-GMP + diphosphate + H(+). Nucleoside triphosphate pyrophosphatase that hydrolyzes 7-methyl-GTP (m(7)GTP). May have a dual role in cell division arrest and in preventing the incorporation of modified nucleotides into cellular nucleic acids. The chain is 7-methyl-GTP pyrophosphatase from Neisseria meningitidis serogroup A / serotype 4A (strain DSM 15465 / Z2491).